Consider the following 339-residue polypeptide: Fructose-1,6-bisphosphatase isozyme 2 (339 aa).

Residues 3–10 form an important for interaction with ALDOA region; sequence DRSPFETD. AMP is bound by residues valine 18 and 28–32; that span reads TGELT. 2 residues coordinate Mg(2+): aspartate 69 and glutamate 98. 113-114 contacts AMP; the sequence is KY. Residues aspartate 119, leucine 121, and aspartate 122 each contribute to the Mg(2+) site. Aspartate 122 contacts substrate. Arginine 141 contributes to the AMP binding site. The Nuclear localization signal signature appears at 204 to 208; the sequence is KKKGK. 213–216 contacts substrate; sequence NEGY. 2 positions are modified to phosphotyrosine: tyrosine 216 and tyrosine 219. Substrate contacts are provided by residues 245 to 249, tyrosine 265, and lysine 275; that span reads YVGSM. Glutamate 281 serves as a coordination point for Mg(2+).

This sequence belongs to the FBPase class 1 family. As to quaternary structure, homotetramer. Interacts with ALDOA; the interaction blocks inhibition by physiological concentrations of AMP and reduces inhibition by Ca(2+). Interacts with alpha-actinin and F-actin. Requires Mg(2+) as cofactor.

Its subcellular location is the cell junction. The protein localises to the cytoplasm. It is found in the nucleus. It localises to the myofibril. The protein resides in the sarcomere. Its subcellular location is the z line. It catalyses the reaction beta-D-fructose 1,6-bisphosphate + H2O = beta-D-fructose 6-phosphate + phosphate. The protein operates within carbohydrate biosynthesis; gluconeogenesis. Its activity is regulated as follows. Subject to complex allosteric regulation. The enzyme can assume an active R-state, or an inactive T-state. Intermediate conformations may exist. AMP acts as an allosteric inhibitor. Fructose 2,6-bisphosphate acts as a competitive inhibitor. Strongly inhibited by Ca(2+). Functionally, catalyzes the hydrolysis of fructose 1,6-bisphosphate to fructose 6-phosphate in the presence of divalent cations and probably participates in glycogen synthesis from carbohydrate precursors, such as lactate. The polypeptide is Fructose-1,6-bisphosphatase isozyme 2 (FBP2) (Bos taurus (Bovine)).